Here is a 319-residue protein sequence, read N- to C-terminus: L-lactate dehydrogenase (319 aa).

NAD(+)-binding positions include Val17, Asp38, Lys43, Tyr69, and 83–84 (GA). Substrate is bound by residues Gln86, Arg92, and 124–127 (NPVD). NAD(+) contacts are provided by residues 122–124 (ATN) and Ser147. A substrate-binding site is contributed by 152–155 (DTAR). Residues Arg157 and His172 each coordinate beta-D-fructose 1,6-bisphosphate. His179 functions as the Proton acceptor in the catalytic mechanism. The residue at position 224 (Tyr224) is a Phosphotyrosine. Thr233 serves as a coordination point for substrate.

This sequence belongs to the LDH/MDH superfamily. LDH family. In terms of assembly, homotetramer.

It localises to the cytoplasm. The catalysed reaction is (S)-lactate + NAD(+) = pyruvate + NADH + H(+). It functions in the pathway fermentation; pyruvate fermentation to lactate; (S)-lactate from pyruvate: step 1/1. Its activity is regulated as follows. Allosterically activated by fructose 1,6-bisphosphate (FBP). Catalyzes the conversion of lactate to pyruvate. The protein is L-lactate dehydrogenase of Bacillus licheniformis (strain ATCC 14580 / DSM 13 / JCM 2505 / CCUG 7422 / NBRC 12200 / NCIMB 9375 / NCTC 10341 / NRRL NRS-1264 / Gibson 46).